We begin with the raw amino-acid sequence, 427 residues long: Glutamate-1-semialdehyde 2,1-aminomutase (427 aa).

At lysine 267 the chain carries N6-(pyridoxal phosphate)lysine.

The protein belongs to the class-III pyridoxal-phosphate-dependent aminotransferase family. HemL subfamily. Homodimer. The cofactor is pyridoxal 5'-phosphate.

The protein resides in the cytoplasm. The enzyme catalyses (S)-4-amino-5-oxopentanoate = 5-aminolevulinate. Its pathway is porphyrin-containing compound metabolism; protoporphyrin-IX biosynthesis; 5-aminolevulinate from L-glutamyl-tRNA(Glu): step 2/2. This Citrifermentans bemidjiense (strain ATCC BAA-1014 / DSM 16622 / JCM 12645 / Bem) (Geobacter bemidjiensis) protein is Glutamate-1-semialdehyde 2,1-aminomutase.